A 393-amino-acid chain; its full sequence is Formate-dependent phosphoribosylglycinamide formyltransferase (393 aa).

N(1)-(5-phospho-beta-D-ribosyl)glycinamide contacts are provided by residues 22 to 23 and Glu-82; that span reads EL. Residues Arg-114, Lys-155, 160–165, 195–198, and Glu-203 each bind ATP; these read SSGHGQ and EGFI. One can recognise an ATP-grasp domain in the interval 119 to 308; it reads RLAAEELGLK…QFALHARAIL (190 aa). Residues Glu-267 and Glu-279 each contribute to the Mg(2+) site. N(1)-(5-phospho-beta-D-ribosyl)glycinamide-binding positions include Asp-286, Lys-356, and 363 to 364; that span reads RR.

The protein belongs to the PurK/PurT family. Homodimer.

The enzyme catalyses N(1)-(5-phospho-beta-D-ribosyl)glycinamide + formate + ATP = N(2)-formyl-N(1)-(5-phospho-beta-D-ribosyl)glycinamide + ADP + phosphate + H(+). It functions in the pathway purine metabolism; IMP biosynthesis via de novo pathway; N(2)-formyl-N(1)-(5-phospho-D-ribosyl)glycinamide from N(1)-(5-phospho-D-ribosyl)glycinamide (formate route): step 1/1. Functionally, involved in the de novo purine biosynthesis. Catalyzes the transfer of formate to 5-phospho-ribosyl-glycinamide (GAR), producing 5-phospho-ribosyl-N-formylglycinamide (FGAR). Formate is provided by PurU via hydrolysis of 10-formyl-tetrahydrofolate. This is Formate-dependent phosphoribosylglycinamide formyltransferase from Actinobacillus pleuropneumoniae serotype 3 (strain JL03).